Reading from the N-terminus, the 86-residue chain is UPF0297 protein BBR47_19030 (86 aa).

This sequence belongs to the UPF0297 family.

The chain is UPF0297 protein BBR47_19030 from Brevibacillus brevis (strain 47 / JCM 6285 / NBRC 100599).